A 494-amino-acid chain; its full sequence is Neuronal acetylcholine receptor subunit alpha-6 (494 aa).

A signal peptide spans 1-25 (MLTSKGQGFLHGGLCLWLCVFTPFF). At 26-239 (KGCVGCATEE…ITYSFYIRRL (214 aa)) the chain is on the extracellular side. N-linked (GlcNAc...) asparagine glycans are attached at residues N54 and N171. Cystine bridges form between C158/C172 and C222/C223. The next 3 membrane-spanning stretches (helical) occupy residues 240–264 (PMFY…VFYL), 272–290 (VTLC…LVIT), and 306–327 (YLLF…VLNI). Topologically, residues 328-465 (HYRTPTTHTM…WKYVAMVVDR (138 aa)) are cytoplasmic. S401 bears the Phosphoserine mark. A helical transmembrane segment spans residues 466–484 (VFLWVFIIVCVFGTAGLFL).

It belongs to the ligand-gated ion channel (TC 1.A.9) family. Acetylcholine receptor (TC 1.A.9.1) subfamily. Alpha-6/CHRNA6 sub-subfamily. Neuronal AChR is composed of two different types of subunits: alpha and non-alpha (beta). CHRNA6/alpha-6 subunit can be combined to CHRNB2/beta-2, CHRNA4/alpha-4 and CHRNB3/beta-3 to give rise to functional receptors. Heteropentamers containing CHRNB3 have an stoichiometry of (CHRNA6:CHRNB2)2:CHRNB3. Interacts with LYPD6.

Its subcellular location is the synaptic cell membrane. The enzyme catalyses Ca(2+)(in) = Ca(2+)(out). It carries out the reaction K(+)(in) = K(+)(out). It catalyses the reaction Na(+)(in) = Na(+)(out). With respect to regulation, activated by a myriad of ligands such as acetylcholine, cytisine and nicotine. CHRNA6 nAChR activity is inhibited by the antagonists alpha-conotoxin MII and PIA, a small disulfide-constrained peptides from cone snails. Component of neuronal acetylcholine receptors (nAChRs) that function as pentameric, ligand-gated cation channels with high calcium permeability among other activities. nAChRs are excitatory neurotrasnmitter receptors formed by a collection of nAChR subunits known to mediate synaptic transmission in the nervous system and the neuromuscular junction. Each nAchR subunit confers differential attributes to channel properties, including activation, deactivation and desensitization kinetics, pH sensitivity, cation permeability, and binding to allosteric modulators. CHRNA6 forms pentameric channels with CHRNB2, CHRNB3 and CHRNA4 that exhibit high sensitivity to ACh and nicotine and are predominantly expressed in only a few brain areas, including dopaminergic neurons, norepirephrine neurons and cells of the visual system. nAChrs containing CHRNA6 subunits mediate endogenous cholinergic modulation of dopamine and gamma-aminobutyric acid (GABA) release in response to nicotine at nerve terminals. This is Neuronal acetylcholine receptor subunit alpha-6 from Homo sapiens (Human).